The following is a 602-amino-acid chain: Protein DGS1, mitochondrial (602 aa).

Transmembrane regions (helical) follow at residues 300-320 (LYWV…IWLL) and 465-485 (INFA…MLTV).

Component of a mitochondrial large protein complex that contains, at least, MIC60, DGS1, TOM40 (e.g. TOM40-1), TOM20 proteins (e.g. TOM20-2), and petC/RISP.

It is found in the mitochondrion outer membrane. In terms of biological role, involved in galactoglycerolipid biosynthesis. Contributes to an intracellular signal that regulates an alternative DGD1-independent galactoglycerolipid biosynthesis pathway in chloroplasts. Being involved in mitochondrial lipid homeostasis, modulates mitochondrion biogenesis and physiology, as well as stress responses. This is Protein DGS1, mitochondrial from Arabidopsis thaliana (Mouse-ear cress).